The sequence spans 141 residues: Hemoglobin subunit alpha-D (141 aa).

Residues 1-141 (VLTHEDCELL…VGDMLAEKYR (141 aa)) form the Globin domain. Heme b is bound by residues His-58 and His-87.

The protein belongs to the globin family. There are three forms of hemoglobin in Sphenodon: A, A' and D. Hb A is a tetramer of two alpha-A and two beta-1, Hb A' is a tetramer of two alpha-a and two beta-2, Hb D is a tetramer of two alpha-D and two beta-2. As to expression, red blood cells.

Involved in oxygen transport from the lung to the various peripheral tissues. This Sphenodon punctatus (Tuatara) protein is Hemoglobin subunit alpha-D (HBAD).